The primary structure comprises 610 residues: UvrABC system protein C (610 aa).

Residues 16 to 94 (SQPGVYRMYD…IKLYQPRYNV (79 aa)) form the GIY-YIG domain. The UVR domain occupies 204–239 (DQVLTQLIARMEKASQDLAFEEAARIRDQIQAVRRV).

The protein belongs to the UvrC family. Interacts with UvrB in an incision complex.

The protein localises to the cytoplasm. Functionally, the UvrABC repair system catalyzes the recognition and processing of DNA lesions. UvrC both incises the 5' and 3' sides of the lesion. The N-terminal half is responsible for the 3' incision and the C-terminal half is responsible for the 5' incision. This is UvrABC system protein C from Salmonella heidelberg (strain SL476).